Reading from the N-terminus, the 262-residue chain is Trypsin theta (262 aa).

Residues 1 to 19 (MHGLVVLLVCLAVGSAFAG) form the signal peptide. Positions 20-34 (TIGVSNADPFEREGR) are cleaved as a propeptide — activation peptide. The Peptidase S1 domain occupies 35–260 (IVGGEDTTIR…LRKWILNASQ (226 aa)). Cys61 and Cys77 are joined by a disulfide. Catalysis depends on charge relay system residues His76 and Asp121. Intrachain disulfides connect Cys186–Cys203 and Cys212–Cys236. Catalysis depends on Ser216, which acts as the Charge relay system.

This sequence belongs to the peptidase S1 family.

Its subcellular location is the secreted. The protein localises to the extracellular space. It carries out the reaction Preferential cleavage: Arg-|-Xaa, Lys-|-Xaa.. This Drosophila erecta (Fruit fly) protein is Trypsin theta (thetaTry).